The sequence spans 458 residues: Ammonium transporter Rh type B (458 aa).

Topologically, residues 1 to 11 (MTDAATNMRLK) are cytoplasmic. A helical transmembrane segment spans residues 12-32 (LPITCFILEIILIILFGTLVQ). At 33 to 58 (YDYETDAKEWHNTSHQDYENDFYFRY) the chain is on the extracellular side. N-linked (GlcNAc...) asparagine glycosylation occurs at N44. A helical transmembrane segment spans residues 59 to 79 (PSFQDVHVMIFVGFGFLMTFL). Residues 80–83 (QRYG) are Cytoplasmic-facing. Residues 84–104 (FGSVGFNFLIAAFSLQWATLM) form a helical membrane-spanning segment. Residues 105 to 121 (QGFFHGMHGGKIHIGVE) lie on the Extracellular side of the membrane. Residues 122 to 142 (SMINADFCTGSVLISFGAVLG) form a helical membrane-spanning segment. At 143 to 151 (KTSPIQLLT) the chain is on the cytoplasmic side. A helical membrane pass occupies residues 152-172 (MAIFEVTLFAVNEFILLSLLG). Residues 173 to 176 (TKDA) are Extracellular-facing. Residues 177-197 (GGSMTIHTFGAYFGLMVTRIL) traverse the membrane as a helical segment. Residues 198–216 (YRPNLDKSKHRNSSVYHSD) lie on the Cytoplasmic side of the membrane. Residues 217–237 (LFAMIGTVYLWMFWPSFNSAI) form a helical membrane-spanning segment. The Extracellular portion of the chain corresponds to 238 to 247 (TAHGDDQHRT). The helical transmembrane segment at 248 to 270 (ALNTYYSLAACTLATYGMSAITS) threads the bilayer. The Cytoplasmic portion of the chain corresponds to 271 to 274 (HDGK). The helical transmembrane segment at 275-295 (LDMVHIQNAALAGGVAVGTAG) threads the bilayer. At 296–298 (EMM) the chain is on the extracellular side. Residues 299 to 319 (LTPFGSMIVGFMAGIISVLGF) traverse the membrane as a helical segment. At 320 to 340 (KFLSPILEDKLKIQDTCGIHN) the chain is on the cytoplasmic side. The helical transmembrane segment at 341–361 (LHGMPGVLGAIVGAVTAALAT) threads the bilayer. Over 362–391 (TDVYGQGMADVFPAVADGSVNATKQGGIQA) the chain is Extracellular. Residues 392–412 (LSLAITLGIAVLGGLIVGFVL) form a helical membrane-spanning segment. Topologically, residues 413 to 458 (KLPVFGTPPDTLCFEDSVYWEVPGSESPEEGELTSVKPEETEHLNS) are cytoplasmic. A disordered region spans residues 436–458 (GSESPEEGELTSVKPEETEHLNS). A compositionally biased stretch (basic and acidic residues) spans 449–458 (KPEETEHLNS).

It belongs to the ammonium transporter (TC 2.A.49) family. Rh subfamily. In terms of tissue distribution, specifically expressed in the gill by pavement cells (at protein level).

The protein resides in the apicolateral cell membrane. It localises to the cytoplasmic vesicle membrane. Functionally, functions as an ammonia transporter. May play a role in the elimination of ammonia in the gill. This is Ammonium transporter Rh type B (rhbg) from Takifugu rubripes (Japanese pufferfish).